Here is a 416-residue protein sequence, read N- to C-terminus: Formyl-CoA:oxalate CoA-transferase (416 aa).

Residues 17–18, arginine 38, 72–75, 96–98, histidine 104, and 137–140 contribute to the CoA site; these read QS, LNTK, NFH, and KAYE. Catalysis depends on aspartate 169, which acts as the Nucleophile. Residue 248 to 250 coordinates substrate; the sequence is GGQ. 273-275 serves as a coordination point for CoA; the sequence is QEQ.

It belongs to the CoA-transferase III family. Frc subfamily. Homodimer.

It carries out the reaction formyl-CoA + oxalate = oxalyl-CoA + formate. It functions in the pathway metabolic intermediate degradation; oxalate degradation; CO(2) and formate from oxalate: step 1/2. Its function is as follows. Involved in the catabolism of oxalate and in the adapatation to low pH via the induction of the oxalate-dependent acid tolerance response (ATR). Catalyzes the transfer of the CoA moiety from formyl-CoA to oxalate. The sequence is that of Formyl-CoA:oxalate CoA-transferase from Escherichia coli (strain ATCC 8739 / DSM 1576 / NBRC 3972 / NCIMB 8545 / WDCM 00012 / Crooks).